A 504-amino-acid polypeptide reads, in one-letter code: Peroxisomal catalase (504 aa).

Catalysis depends on residues H63 and N136. A heme-binding site is contributed by Y345. The Microbody targeting signal signature appears at 502-504 (NKF).

This sequence belongs to the catalase family. Heme is required as a cofactor.

The protein localises to the peroxisome matrix. It carries out the reaction 2 H2O2 = O2 + 2 H2O. Its function is as follows. Catalyzes the degradation of hydrogen peroxide (H(2)O(2)) generated by peroxisomal oxidases to water and oxygen, thereby protecting cells from the toxic effects of hydrogen peroxide. The chain is Peroxisomal catalase (CTA1) from Candida boidinii (Yeast).